We begin with the raw amino-acid sequence, 81 residues long: Mipartoxin-1 (81 aa).

Positions 1–21 (MKTLLLTLVVVTIVCLDLGNS) are cleaved as a signal peptide. 4 disulfides stabilise this stretch: cysteine 24–cysteine 42, cysteine 35–cysteine 61, cysteine 65–cysteine 73, and cysteine 74–cysteine 79.

Belongs to the three-finger toxin family. Short-chain subfamily. Contains 4 disulfide bonds. As to expression, expressed by the venom gland.

It localises to the secreted. In terms of biological role, snake venom neurotoxin that blocks neuromuscular transmission on both avian and mouse nerve-muscle preparations, presenting a postsynaptic action through the nicotinic acetylcholine receptor (nAChR). Reversibly inhibits twitches in mouse phrenic nerve diaphragm and irreversibly in chick biventer cervicis muscle. Has no cytotoxic activity towards C2C12 cells up to 180 ug/ml. In Micrurus mipartitus (Red-tailed coral snake), this protein is Mipartoxin-1.